The following is a 142-amino-acid chain: Putative pre-16S rRNA nuclease (142 aa).

This sequence belongs to the YqgF nuclease family.

It is found in the cytoplasm. In terms of biological role, could be a nuclease involved in processing of the 5'-end of pre-16S rRNA. This Prosthecochloris aestuarii (strain DSM 271 / SK 413) protein is Putative pre-16S rRNA nuclease.